The chain runs to 415 residues: Camphor 5-monooxygenase (415 aa).

Cys358 lines the heme pocket.

The protein belongs to the cytochrome P450 family. Heme is required as a cofactor.

The protein resides in the cytoplasm. The enzyme catalyses 2 reduced [2Fe-2S]-[putidaredoxin] + (1R,4R)-camphor + O2 + 2 H(+) = (1R,4R,5R)-5-hydroxycamphor + 2 oxidized [2Fe-2S]-[putidaredoxin] + H2O. It participates in terpene metabolism; (R)-camphor degradation. In terms of biological role, involved in a camphor oxidation system. The chain is Camphor 5-monooxygenase (camC) from Pseudomonas putida (Arthrobacter siderocapsulatus).